We begin with the raw amino-acid sequence, 630 residues long: Glutathione hydrolase proenzyme 1 (630 aa).

Residues 1–49 are Cytoplasmic-facing; that stretch reads MGINTSSAQSSGAASIARSSVNVKSGNRHLSSNKKSATSALEERASRPS. The helical; Signal-anchor for type II membrane protein transmembrane segment at 50 to 70 threads the bilayer; it reads ILVTFLVLAGTILSLYIWPIL. The Lumenal portion of the chain corresponds to 71 to 630; that stretch reads SPDLFFANQR…SRKQAVAAAY (560 aa). Asn156 is a glycosylation site (N-linked (GlcNAc...) asparagine). Residue Arg165 participates in L-glutamate binding. 4 N-linked (GlcNAc...) asparagine glycosylation sites follow: Asn180, Asn315, Asn397, and Asn417. Catalysis depends on Thr441, which acts as the Nucleophile. L-glutamate contacts are provided by residues Ser459, Asn461, Asp483, 511–512, and 532–533; these read SS and GG. The N-linked (GlcNAc...) asparagine glycan is linked to Asn612.

This sequence belongs to the gamma-glutamyltransferase family. As to quaternary structure, heterodimer composed of the light and heavy chains. The active site is located in the light chain. Cleaved by autocatalysis into a large and a small subunit.

The protein resides in the endoplasmic reticulum membrane. The catalysed reaction is an N-terminal (5-L-glutamyl)-[peptide] + an alpha-amino acid = 5-L-glutamyl amino acid + an N-terminal L-alpha-aminoacyl-[peptide]. It catalyses the reaction glutathione + H2O = L-cysteinylglycine + L-glutamate. It carries out the reaction an S-substituted glutathione + H2O = an S-substituted L-cysteinylglycine + L-glutamate. Its pathway is sulfur metabolism; glutathione metabolism. Its function is as follows. Catalyzes the transfer of the gamma-glutamyl moiety of glutathione (GSH) and other gamma-glutamyl compounds to amino acids and peptides. Major GSH-degrading enzyme, catalyzing the hydrolytic release of L-glutamate from GSH. In Schizosaccharomyces pombe (strain 972 / ATCC 24843) (Fission yeast), this protein is Glutathione hydrolase proenzyme 1 (ggt1).